The primary structure comprises 384 residues: Carbamoyl phosphate synthase small chain (384 aa).

The segment at 1 to 195 (MLPVLPPALL…LGRGHGTLAD (195 aa)) is CPSase. L-glutamine contacts are provided by serine 50, glycine 247, and glycine 249. Residues 199–384 (HVVAYDFGVK…RFVALMQERA (186 aa)) enclose the Glutamine amidotransferase type-1 domain. Cysteine 275 functions as the Nucleophile in the catalytic mechanism. Leucine 276, glutamine 279, asparagine 317, glycine 319, and phenylalanine 320 together coordinate L-glutamine. Catalysis depends on residues histidine 359 and glutamate 361.

Belongs to the CarA family. As to quaternary structure, composed of two chains; the small (or glutamine) chain promotes the hydrolysis of glutamine to ammonia, which is used by the large (or ammonia) chain to synthesize carbamoyl phosphate. Tetramer of heterodimers (alpha,beta)4.

The catalysed reaction is hydrogencarbonate + L-glutamine + 2 ATP + H2O = carbamoyl phosphate + L-glutamate + 2 ADP + phosphate + 2 H(+). It catalyses the reaction L-glutamine + H2O = L-glutamate + NH4(+). It participates in amino-acid biosynthesis; L-arginine biosynthesis; carbamoyl phosphate from bicarbonate: step 1/1. Its pathway is pyrimidine metabolism; UMP biosynthesis via de novo pathway; (S)-dihydroorotate from bicarbonate: step 1/3. Small subunit of the glutamine-dependent carbamoyl phosphate synthetase (CPSase). CPSase catalyzes the formation of carbamoyl phosphate from the ammonia moiety of glutamine, carbonate, and phosphate donated by ATP, constituting the first step of 2 biosynthetic pathways, one leading to arginine and/or urea and the other to pyrimidine nucleotides. The small subunit (glutamine amidotransferase) binds and cleaves glutamine to supply the large subunit with the substrate ammonia. In Rubrivivax gelatinosus (strain NBRC 100245 / IL144), this protein is Carbamoyl phosphate synthase small chain.